A 428-amino-acid chain; its full sequence is 3-phosphoshikimate 1-carboxyvinyltransferase (428 aa).

3 residues coordinate 3-phosphoshikimate: Lys22, Ser23, and Arg27. A phosphoenolpyruvate-binding site is contributed by Lys22. Phosphoenolpyruvate-binding residues include Gly96 and Arg124. The 3-phosphoshikimate site is built by Ser170, Ser171, Gln172, Ser198, Asp314, Asn337, and Lys341. Gln172 is a binding site for phosphoenolpyruvate. The active-site Proton acceptor is Asp314. Positions 345, 387, and 412 each coordinate phosphoenolpyruvate.

This sequence belongs to the EPSP synthase family. Monomer.

It localises to the cytoplasm. It catalyses the reaction 3-phosphoshikimate + phosphoenolpyruvate = 5-O-(1-carboxyvinyl)-3-phosphoshikimate + phosphate. It participates in metabolic intermediate biosynthesis; chorismate biosynthesis; chorismate from D-erythrose 4-phosphate and phosphoenolpyruvate: step 6/7. Its function is as follows. Catalyzes the transfer of the enolpyruvyl moiety of phosphoenolpyruvate (PEP) to the 5-hydroxyl of shikimate-3-phosphate (S3P) to produce enolpyruvyl shikimate-3-phosphate and inorganic phosphate. The protein is 3-phosphoshikimate 1-carboxyvinyltransferase of Shewanella denitrificans (strain OS217 / ATCC BAA-1090 / DSM 15013).